Consider the following 253-residue polypeptide: Uroplakin-3b-like protein 1 (253 aa).

The N-terminal stretch at 1-26 is a signal peptide; the sequence is MGLGRGQSPLLMALLLLLACLQMGMS. Topologically, residues 27-194 are extracellular; the sequence is LERISYVPQL…PGPQTAGTVV (168 aa). 2 N-linked (GlcNAc...) asparagine glycosylation sites follow: Asn78 and Asn130. The helical transmembrane segment at 195-215 threads the bilayer; that stretch reads IIAILSVLLAVLLAALLALLI. At 216 to 253 the chain is on the cytoplasmic side; the sequence is FTWYDTCGSTPISGPGELVFVRKYDTHHMSRPSTVGGS.

The protein belongs to the uroplakin-3 family.

The protein localises to the membrane. This is Uroplakin-3b-like protein 1 from Bos taurus (Bovine).